Reading from the N-terminus, the 172-residue chain is Shikimate kinase (172 aa).

An ATP-binding site is contributed by 11–16; the sequence is GAGKST. S15 serves as a coordination point for Mg(2+). Substrate is bound by residues D33, R57, and G79. Residue R117 coordinates ATP. R136 contributes to the substrate binding site. R153 is a binding site for ATP.

The protein belongs to the shikimate kinase family. Monomer. Mg(2+) is required as a cofactor.

The protein localises to the cytoplasm. It carries out the reaction shikimate + ATP = 3-phosphoshikimate + ADP + H(+). It functions in the pathway metabolic intermediate biosynthesis; chorismate biosynthesis; chorismate from D-erythrose 4-phosphate and phosphoenolpyruvate: step 5/7. Catalyzes the specific phosphorylation of the 3-hydroxyl group of shikimic acid using ATP as a cosubstrate. The polypeptide is Shikimate kinase (Pseudomonas syringae pv. tomato (strain ATCC BAA-871 / DC3000)).